A 369-amino-acid chain; its full sequence is Cobalt-precorrin-5B C(1)-methyltransferase (369 aa).

It belongs to the CbiD family.

The catalysed reaction is Co-precorrin-5B + S-adenosyl-L-methionine = Co-precorrin-6A + S-adenosyl-L-homocysteine. The protein operates within cofactor biosynthesis; adenosylcobalamin biosynthesis; cob(II)yrinate a,c-diamide from sirohydrochlorin (anaerobic route): step 6/10. Catalyzes the methylation of C-1 in cobalt-precorrin-5B to form cobalt-precorrin-6A. This chain is Cobalt-precorrin-5B C(1)-methyltransferase, found in Brucella melitensis biotype 2 (strain ATCC 23457).